The chain runs to 160 residues: Cytochrome b6-f complex subunit 4 (160 aa).

Residues 1-35 are Cytoplasmic-facing; sequence MATLKKPDLSDPKLRAKLAKGMGHNYYGEPAWPND. A helical transmembrane segment spans residues 36–56; sequence LLYVFPVVIMGTFACIVALSV. Over 57–94 the chain is Lumenal, thylakoid; that stretch reads LDPAMVGEPADPFATPLEILPEWYLYPVFQILRSVPNK. A helical membrane pass occupies residues 95-115; sequence LLGVLLMASVPLGLILVPFIE. Topologically, residues 116–130 are cytoplasmic; it reads NVNKFQNPFRRPVAT. Residues 131 to 151 form a helical membrane-spanning segment; it reads TIFLFGTLVTIWLGIGATFPL. Residues 152–160 are Lumenal, thylakoid-facing; it reads DKTLTLGLF.

It belongs to the cytochrome b family. PetD subfamily. As to quaternary structure, the 4 large subunits of the cytochrome b6-f complex are cytochrome b6, subunit IV (17 kDa polypeptide, PetD), cytochrome f and the Rieske protein, while the 4 small subunits are PetG, PetL, PetM and PetN. The complex functions as a dimer.

It localises to the cellular thylakoid membrane. In terms of biological role, component of the cytochrome b6-f complex, which mediates electron transfer between photosystem II (PSII) and photosystem I (PSI), cyclic electron flow around PSI, and state transitions. In Mastigocladus laminosus (Fischerella sp.), this protein is Cytochrome b6-f complex subunit 4.